A 71-amino-acid chain; its full sequence is UPF0346 protein SPG_0874 (71 aa).

It belongs to the UPF0346 family.

The polypeptide is UPF0346 protein SPG_0874 (Streptococcus pneumoniae serotype 19F (strain G54)).